Consider the following 465-residue polypeptide: GTPase Der (465 aa).

EngA-type G domains follow at residues 3–167 (PLVA…PEEG) and 179–352 (VRIA…ASAT). GTP is bound by residues 9-16 (GRPNVGKS), 57-61 (DTGGI), 119-122 (NKID), 185-192 (GRPNVGKS), 232-236 (DTAGL), and 297-300 (NKWD). In terms of domain architecture, KH-like spans 353 to 437 (HEFSTSEVNQ…PVRFIFREGA (85 aa)).

Belongs to the TRAFAC class TrmE-Era-EngA-EngB-Septin-like GTPase superfamily. EngA (Der) GTPase family. In terms of assembly, associates with the 50S ribosomal subunit.

Functionally, GTPase that plays an essential role in the late steps of ribosome biogenesis. The protein is GTPase Der of Xanthomonas campestris pv. campestris (strain 8004).